The sequence spans 79 residues: uncharacterized protein (79 aa).

Residues 15–37 (KSIVSVLALTSLGCGVFVISATA) traverse the membrane as a helical segment.

The protein localises to the membrane. This is an uncharacterized protein from Dictyostelium discoideum (Social amoeba).